A 381-amino-acid polypeptide reads, in one-letter code: tRNA pseudouridine synthase D (381 aa).

Aspartate 81 acts as the Nucleophile in catalysis. One can recognise a TRUD domain in the interval 160-335 (GMPNYFGPQR…TLGSRRFFWV (176 aa)).

The protein belongs to the pseudouridine synthase TruD family.

The catalysed reaction is uridine(13) in tRNA = pseudouridine(13) in tRNA. In terms of biological role, responsible for synthesis of pseudouridine from uracil-13 in transfer RNAs. The protein is tRNA pseudouridine synthase D of Helicobacter pylori (strain Shi470).